Consider the following 398-residue polypeptide: Succinate--CoA ligase [ADP-forming] subunit beta (398 aa).

The ATP-grasp domain maps to 9 to 254 (KALLHEFGVP…ETEEDAKEIE (246 aa)). Residues lysine 46, 53–55 (GRG), glutamate 109, serine 112, and glutamate 117 each bind ATP. Asparagine 209 and aspartate 223 together coordinate Mg(2+). Residues asparagine 274 and 331–333 (GIM) contribute to the substrate site.

Belongs to the succinate/malate CoA ligase beta subunit family. In terms of assembly, heterotetramer of two alpha and two beta subunits. It depends on Mg(2+) as a cofactor.

The catalysed reaction is succinate + ATP + CoA = succinyl-CoA + ADP + phosphate. It catalyses the reaction GTP + succinate + CoA = succinyl-CoA + GDP + phosphate. It participates in carbohydrate metabolism; tricarboxylic acid cycle; succinate from succinyl-CoA (ligase route): step 1/1. In terms of biological role, succinyl-CoA synthetase functions in the citric acid cycle (TCA), coupling the hydrolysis of succinyl-CoA to the synthesis of either ATP or GTP and thus represents the only step of substrate-level phosphorylation in the TCA. The beta subunit provides nucleotide specificity of the enzyme and binds the substrate succinate, while the binding sites for coenzyme A and phosphate are found in the alpha subunit. The protein is Succinate--CoA ligase [ADP-forming] subunit beta of Bradyrhizobium sp. (strain ORS 278).